The following is a 203-amino-acid chain: Sarcosine oxidase subunit gamma (203 aa).

Belongs to the SoxG family. As to quaternary structure, heterotetramer composed of subunits alpha (SoxA), beta (SoxB), gamma (SoxG) and delta (SoxD).

It is found in the cytoplasm. It catalyses the reaction sarcosine + (6S)-5,6,7,8-tetrahydrofolate + O2 = (6R)-5,10-methylene-5,6,7,8-tetrahydrofolate + glycine + H2O2. The enzyme catalyses sarcosine + O2 + H2O = formaldehyde + glycine + H2O2. Functionally, in the presence of tetrahydrofolate, catalyzes the oxidative demethylation of sarcosine to yield glycine, 5,10-methylenetetrahydrofolate and hydrogen peroxide. In the absence of tetrahydrofolate, catalyzes the oxidative demethylation of sarcosine to yield glycine, formaldehyde and hydrogen peroxide. The sequence is that of Sarcosine oxidase subunit gamma (soxG) from Arthrobacter sp.